The chain runs to 493 residues: Transcript termination protein A18 (493 aa).

Residues 100-256 enclose the Helicase ATP-binding domain; sequence MIELKRPLYI…NSIINIAKLS (157 aa). 113 to 120 serves as a coordination point for ATP; sequence LACGFGKT. Residues 206-209 carry the DESH box motif; sequence DESH.

This sequence belongs to the helicase family. Poxviruses subfamily. In terms of assembly, interacts with G2. Might be part of a transcription complex composed at least of G2, A18, and H5.

Its subcellular location is the virion. Its function is as follows. DNA helicase which seems to act as a postreplicative transcription termination factor. Involved in ATP-dependent release of nascent RNA. Forms a stable complex with single-stranded DNA, and to a lesser extent RNA. The chain is Transcript termination protein A18 from Camelus.